The primary structure comprises 551 residues: Dihydroxy-acid dehydratase (551 aa).

Mg(2+) is bound at residue D78. C119 lines the [2Fe-2S] cluster pocket. Positions 120 and 121 each coordinate Mg(2+). K121 bears the N6-carboxylysine mark. Position 191 (C191) interacts with [2Fe-2S] cluster. E441 is a binding site for Mg(2+). The Proton acceptor role is filled by S467.

It belongs to the IlvD/Edd family. In terms of assembly, homodimer. [2Fe-2S] cluster serves as cofactor. The cofactor is Mg(2+).

The catalysed reaction is (2R)-2,3-dihydroxy-3-methylbutanoate = 3-methyl-2-oxobutanoate + H2O. It carries out the reaction (2R,3R)-2,3-dihydroxy-3-methylpentanoate = (S)-3-methyl-2-oxopentanoate + H2O. It functions in the pathway amino-acid biosynthesis; L-isoleucine biosynthesis; L-isoleucine from 2-oxobutanoate: step 3/4. The protein operates within amino-acid biosynthesis; L-valine biosynthesis; L-valine from pyruvate: step 3/4. Functions in the biosynthesis of branched-chain amino acids. Catalyzes the dehydration of (2R,3R)-2,3-dihydroxy-3-methylpentanoate (2,3-dihydroxy-3-methylvalerate) into 2-oxo-3-methylpentanoate (2-oxo-3-methylvalerate) and of (2R)-2,3-dihydroxy-3-methylbutanoate (2,3-dihydroxyisovalerate) into 2-oxo-3-methylbutanoate (2-oxoisovalerate), the penultimate precursor to L-isoleucine and L-valine, respectively. The polypeptide is Dihydroxy-acid dehydratase (Pyrococcus abyssi (strain GE5 / Orsay)).